The primary structure comprises 351 residues: Histidine protein kinase SaeS (351 aa).

2 helical membrane passes run 9–29 (IIIG…IAYI) and 40–60 (TLTL…SIFI). An HAMP domain is found at 61–114 (NPLIQKIKQFNIKTKQFANGNYASNDKTFNSPKEIYELNQSFNKMASEITQQMN). Residues 129–348 (NLAHDLKTPL…TMTVTLHKLD (220 aa)) enclose the Histidine kinase domain. H132 carries the phosphohistidine; by autocatalysis modification.

Autophosphorylated.

The protein resides in the cell membrane. The enzyme catalyses ATP + protein L-histidine = ADP + protein N-phospho-L-histidine.. Member of the two-component regulatory system SaeR/SaeS involved in the regulation of staphylococcal virulence factors in a strain-dependent fashion. Probably functions as a membrane-associated protein kinase that upon sensing the appropriate signal, autophosphorylates and in turn activates the cytosolic response regulator SaeR. The chain is Histidine protein kinase SaeS (saeS) from Staphylococcus aureus (strain MRSA252).